The chain runs to 595 residues: Beta-(1--&gt;2)glucan export ATP-binding/permease protein NdvA (595 aa).

The next 5 membrane-spanning stretches (helical) occupy residues 21 to 41 (FLLI…EPIL), 56 to 76 (LVTL…YVLV), 129 to 149 (IWLE…VLVP), 158 to 178 (LSIV…LVMQ), and 252 to 272 (ISIV…QLSV). An ABC transmembrane type-1 domain is found at 21 to 301 (FLLICTANIT…ISGFINLAVS (281 aa)). The region spanning 335-569 (IQFHHVTYEF…DGHFYKLLKA (235 aa)) is the ABC transporter domain. 368–375 (GPTGAGKT) serves as a coordination point for ATP.

The protein belongs to the ABC transporter superfamily. Beta-(1--&gt;2)glucan exporter (TC 3.A.1.108.1) family. Homodimer.

It is found in the cell inner membrane. The enzyme catalyses [(1-&gt;2)-beta-D-glucosyl](n)(in) + ATP + H2O = [(1-&gt;2)-beta-D-glucosyl](n)(out) + ADP + phosphate + H(+). Its function is as follows. Involved in beta-(1--&gt;2)glucan export. Transmembrane domains (TMD) form a pore in the inner membrane and the ATP-binding domain (NBD) is responsible for energy generation. The chain is Beta-(1--&gt;2)glucan export ATP-binding/permease protein NdvA from Bartonella bacilliformis (strain ATCC 35685 / KC583 / Herrer 020/F12,63).